The primary structure comprises 514 residues: Multifunctional alkaline phosphatase superfamily protein PehA (514 aa).

Mn(2+) is bound by residues Asp-12, Cys-57, Asp-324, and His-325. The active-site Nucleophile is the Cys-57. At Cys-57 the chain carries 3-oxoalanine (Cys).

This sequence belongs to the alkaline phosphatase superfamily. Homotetramer. Mn(2+) serves as cofactor. The conversion to 3-oxoalanine (also known as C-formylglycine, FGly), of a serine or cysteine residue in prokaryotes and of a cysteine residue in eukaryotes, is critical for catalytic activity. Phosphate triester hydrolytic activity is retained with unmodified cysteine acting as a nucleophile.

Its activity is regulated as follows. Anions including Cl(-) and CH3COO(-), and SO4(2-) salts stimulate activity 20-40% at 100 mM. Functionally, hydrolytic enzyme with a broad substrate specificity acting on phosphate diesters and phosphonate monoesters. Hydrolyzes phosphate mono- and triesters, sulfate monoesters and sulfonate monoesters. Hydrolyzes glyphosate monoesters. Does not hydrolyze DNA or cGMP. Hydrolyzes glyceryl glyphosate, but this substrate has a much lower affinity than the glyphosate monoesters. The protein is Multifunctional alkaline phosphatase superfamily protein PehA of Trinickia caryophylli (Paraburkholderia caryophylli).